The sequence spans 328 residues: DNA-directed RNA polymerase subunit alpha (328 aa).

Positions Met-1–Glu-231 are alpha N-terminal domain (alpha-NTD). Residues Phe-248–Arg-328 form an alpha C-terminal domain (alpha-CTD) region.

The protein belongs to the RNA polymerase alpha chain family. Homodimer. The RNAP catalytic core consists of 2 alpha, 1 beta, 1 beta' and 1 omega subunit. When a sigma factor is associated with the core the holoenzyme is formed, which can initiate transcription.

It carries out the reaction RNA(n) + a ribonucleoside 5'-triphosphate = RNA(n+1) + diphosphate. DNA-dependent RNA polymerase catalyzes the transcription of DNA into RNA using the four ribonucleoside triphosphates as substrates. The sequence is that of DNA-directed RNA polymerase subunit alpha from Leptothrix cholodnii (strain ATCC 51168 / LMG 8142 / SP-6) (Leptothrix discophora (strain SP-6)).